A 409-amino-acid polypeptide reads, in one-letter code: Putative kinase Y4dM (409 aa).

Asp-293 serves as the catalytic Proton acceptor.

It belongs to the HipA Ser/Thr kinase family.

The protein is Putative kinase Y4dM of Sinorhizobium fredii (strain NBRC 101917 / NGR234).